The primary structure comprises 47 residues: Potassium channel toxin TcoKIK (47 aa).

Residues Glu14–Leu47 form the BetaSPN-type CS-alpha/beta domain. Cystine bridges form between Cys17–Cys37, Cys24–Cys42, and Cys28–Cys44.

This sequence belongs to the long chain scorpion toxin family. Class 2 subfamily. In terms of tissue distribution, expressed by the venom gland.

The protein resides in the secreted. The protein localises to the target cell membrane. Blocks voltage-gated potassium channels. Its application (10 uM) to cells recombinantly expressing channels results in membrane damage and cell lysis. The protein is Potassium channel toxin TcoKIK of Tityus costatus (Brazilian scorpion).